The following is an 880-amino-acid chain: Leucine--tRNA ligase (880 aa).

Positions 46 to 56 match the 'HIGH' region motif; that stretch reads PYPSGALHMGH. Positions 638–642 match the 'KMSKS' region motif; the sequence is KMSKS. Residue Lys641 participates in ATP binding.

Belongs to the class-I aminoacyl-tRNA synthetase family.

Its subcellular location is the cytoplasm. The catalysed reaction is tRNA(Leu) + L-leucine + ATP = L-leucyl-tRNA(Leu) + AMP + diphosphate. The polypeptide is Leucine--tRNA ligase (Xanthomonas oryzae pv. oryzae (strain KACC10331 / KXO85)).